We begin with the raw amino-acid sequence, 188 residues long: NADH-quinone oxidoreductase subunit B 1 (188 aa).

[4Fe-4S] cluster-binding residues include Cys-32, Cys-33, Cys-98, and Cys-128. The tract at residues 153–188 (VGGVSRPDALASPADALPPRAADSLTAPPVRPPDPS) is disordered. A compositionally biased stretch (low complexity) spans 157–177 (SRPDALASPADALPPRAADSL).

It belongs to the complex I 20 kDa subunit family. As to quaternary structure, NDH-1 is composed of 14 different subunits. Subunits NuoB, C, D, E, F, and G constitute the peripheral sector of the complex. The cofactor is [4Fe-4S] cluster.

The protein localises to the cell membrane. The enzyme catalyses a quinone + NADH + 5 H(+)(in) = a quinol + NAD(+) + 4 H(+)(out). NDH-1 shuttles electrons from NADH, via FMN and iron-sulfur (Fe-S) centers, to quinones in the respiratory chain. The immediate electron acceptor for the enzyme in this species is believed to be a menaquinone. Couples the redox reaction to proton translocation (for every two electrons transferred, four hydrogen ions are translocated across the cytoplasmic membrane), and thus conserves the redox energy in a proton gradient. The chain is NADH-quinone oxidoreductase subunit B 1 (nuoB1) from Salinispora tropica (strain ATCC BAA-916 / DSM 44818 / JCM 13857 / NBRC 105044 / CNB-440).